The primary structure comprises 216 residues: Kynurenine formamidase (216 aa).

F21 contributes to the substrate binding site. Positions 51, 55, and 57 each coordinate Zn(2+). H61 functions as the Proton donor/acceptor in the catalytic mechanism. Zn(2+) is bound by residues H167 and E179.

This sequence belongs to the Cyclase 1 superfamily. KynB family. As to quaternary structure, homodimer. The cofactor is Zn(2+).

The enzyme catalyses N-formyl-L-kynurenine + H2O = L-kynurenine + formate + H(+). Its pathway is amino-acid degradation; L-tryptophan degradation via kynurenine pathway; L-kynurenine from L-tryptophan: step 2/2. In terms of biological role, catalyzes the hydrolysis of N-formyl-L-kynurenine to L-kynurenine, the second step in the kynurenine pathway of tryptophan degradation. The chain is Kynurenine formamidase from Paracidovorax citrulli (strain AAC00-1) (Acidovorax citrulli).